Reading from the N-terminus, the 287-residue chain is Pyridoxal 5'-phosphate synthase subunit PdxS (287 aa).

Asp21 is a binding site for D-ribose 5-phosphate. Residue Lys78 is the Schiff-base intermediate with D-ribose 5-phosphate of the active site. A D-ribose 5-phosphate-binding site is contributed by Gly150. Arg162 contributes to the D-glyceraldehyde 3-phosphate binding site. D-ribose 5-phosphate contacts are provided by residues Gly211 and 232 to 233 (GS).

It belongs to the PdxS/SNZ family. As to quaternary structure, in the presence of PdxT, forms a dodecamer of heterodimers.

The catalysed reaction is aldehydo-D-ribose 5-phosphate + D-glyceraldehyde 3-phosphate + L-glutamine = pyridoxal 5'-phosphate + L-glutamate + phosphate + 3 H2O + H(+). Its pathway is cofactor biosynthesis; pyridoxal 5'-phosphate biosynthesis. Its function is as follows. Catalyzes the formation of pyridoxal 5'-phosphate from ribose 5-phosphate (RBP), glyceraldehyde 3-phosphate (G3P) and ammonia. The ammonia is provided by the PdxT subunit. Can also use ribulose 5-phosphate and dihydroxyacetone phosphate as substrates, resulting from enzyme-catalyzed isomerization of RBP and G3P, respectively. The sequence is that of Pyridoxal 5'-phosphate synthase subunit PdxS from Tropheryma whipplei (strain Twist) (Whipple's bacillus).